A 472-amino-acid polypeptide reads, in one-letter code: Sulfate adenylyltransferase subunit 1 (472 aa).

The tr-type G domain maps to 22–239; it reads KELLRFLTCG…TVPIAGDKNY (218 aa). Positions 31–38 are G1; it reads GSVDDGKS. Position 31-38 (31-38) interacts with GTP; it reads GSVDDGKS. The interval 89 to 93 is G2; that stretch reads GITID. The G3 stretch occupies residues 110–113; it reads DTPG. GTP contacts are provided by residues 110–114 and 165–168; these read DTPGH and NKMD. A G4 region spans residues 165–168; that stretch reads NKMD. The tract at residues 202 to 204 is G5; it reads SAL.

It belongs to the TRAFAC class translation factor GTPase superfamily. Classic translation factor GTPase family. CysN/NodQ subfamily. As to quaternary structure, heterodimer composed of CysD, the smaller subunit, and CysN.

The catalysed reaction is sulfate + ATP + H(+) = adenosine 5'-phosphosulfate + diphosphate. It participates in sulfur metabolism; hydrogen sulfide biosynthesis; sulfite from sulfate: step 1/3. Functionally, with CysD forms the ATP sulfurylase (ATPS) that catalyzes the adenylation of sulfate producing adenosine 5'-phosphosulfate (APS) and diphosphate, the first enzymatic step in sulfur assimilation pathway. APS synthesis involves the formation of a high-energy phosphoric-sulfuric acid anhydride bond driven by GTP hydrolysis by CysN coupled to ATP hydrolysis by CysD. This chain is Sulfate adenylyltransferase subunit 1, found in Cellvibrio japonicus (strain Ueda107) (Pseudomonas fluorescens subsp. cellulosa).